The following is a 212-amino-acid chain: Spore germination lipase LipC (212 aa).

Ser-11 serves as the catalytic Nucleophile. Residues Gly-50 and Asn-82 each coordinate substrate. Residues Asp-186 and His-189 contribute to the active site.

It belongs to the 'GDSL' lipolytic enzyme family.

It is found in the spore coat. Lipase involved in spore germination. The polypeptide is Spore germination lipase LipC (lipC) (Bacillus licheniformis (strain ATCC 14580 / DSM 13 / JCM 2505 / CCUG 7422 / NBRC 12200 / NCIMB 9375 / NCTC 10341 / NRRL NRS-1264 / Gibson 46)).